A 548-amino-acid polypeptide reads, in one-letter code: MTNRSQLASWQALEKSATKMKQSHLRDLFAKDDARFSQFSTQIPGLLFDYSKQRIDKDVFTQLIALAKECDISAWREKMFNGEKINITENRAVLHTALRNRAHTPLIVDGENVTELVDNELAKIKLFVEKVRSGKWLGYSGKPVKDVVSIGVGGSNLGPQMATEALKALSDDTLNVHYVSNADGVQIASVLKNIDAETTLFVIASKTFTTSETMTNAKTAVDWFLQTAKDNAAIAKHFVAVSTNLEKTAEFGISNDNVFTMWDWVGGRFSLWSAIGLPIALYAGYDAFEAILEGAYEVDEHFKNAPLEQNIPLIMALLSVWNTSFLGYTSQAILPYDQALHMLPAYLQQGEMESNGKHVNFAGETVPYTTVPIIWGMTGINGQHAFYQCLHQGNVIVPADFIASIKPQVNVDKHHDILLSNFFAQTEALMNGVDEQEITADLTAKGKSQAQIDELLKHKIHQGNRPTTSMLLDSVDAKTVGRLIALYEHKIFCQGIILEICSFDQWGVELGKGLASKIEAELVDERVKYAHDSSTNGLMAYYKQHRTQ.

The active-site Proton donor is the glutamate 353. Residues histidine 384 and lysine 512 contribute to the active site.

This sequence belongs to the GPI family.

The protein resides in the cytoplasm. It catalyses the reaction alpha-D-glucose 6-phosphate = beta-D-fructose 6-phosphate. It participates in carbohydrate biosynthesis; gluconeogenesis. It functions in the pathway carbohydrate degradation; glycolysis; D-glyceraldehyde 3-phosphate and glycerone phosphate from D-glucose: step 2/4. In terms of biological role, catalyzes the reversible isomerization of glucose-6-phosphate to fructose-6-phosphate. The protein is Glucose-6-phosphate isomerase of Pseudoalteromonas translucida (strain TAC 125).